Reading from the N-terminus, the 456-residue chain is RUN domain-containing protein 3B (456 aa).

Residues 1 to 24 form a disordered region; the sequence is MASRSLGGLSGIRGGGGGGGKKSL. Residues 8-21 show a composition bias toward gly residues; the sequence is GLSGIRGGGGGGGK. Arginine 13 bears the Omega-N-methylarginine mark. Residues 57-189 enclose the RUN domain; that stretch reads DDSSPEFNNF…IDFSFCLKGE (133 aa). Serine 215 and serine 216 each carry phosphoserine. The interval 216 to 237 is disordered; sequence SDEEELRTLGSSGSESSTPENV. Residues 224 to 235 are compositionally biased toward polar residues; sequence LGSSGSESSTPE. The stretch at 300-325 forms a coiled coil; that stretch reads AHKLEKEQLEYIIVELQDQLTVLKNN. Residues 382 to 405 are compositionally biased toward polar residues; it reads SLSQTSLDPGQSQEGDGKQDTLNV. The disordered stretch occupies residues 382-411; sequence SLSQTSLDPGQSQEGDGKQDTLNVMSEGKE.

The protein belongs to the RUNDC3 family. As to quaternary structure, interacts with RAP2A.

This Pongo abelii (Sumatran orangutan) protein is RUN domain-containing protein 3B (RUNDC3B).